A 407-amino-acid polypeptide reads, in one-letter code: Probable cysteine protease atg4 (407 aa).

The active-site Nucleophile is C136. Residues D310 and H312 contribute to the active site.

The protein belongs to the peptidase C54 family.

The protein resides in the cytoplasm. It is found in the nucleus. Its subcellular location is the preautophagosomal structure. It catalyses the reaction [protein]-C-terminal L-amino acid-glycyl-phosphatidylethanolamide + H2O = [protein]-C-terminal L-amino acid-glycine + a 1,2-diacyl-sn-glycero-3-phosphoethanolamine. Its function is as follows. Cysteine protease that is required for autophagy. Plays a key role in cytoplasm to vacuole transport (Cvt) and autophagy by mediating both proteolytic activation and delipidation of atg8. The protease activity is required for proteolytic activation of atg8 by the cleavage of the C-terminal amino acid of atg8 to reveal a C-terminal glycine. Azg8 ubiquitin-like activity requires the exposure of the glycine at the C-terminus for its conjugation to phosphatidylethanolamine (PE) and its insertion to membranes, which is necessary for autophagy. The atg8-PE conjugate mediates tethering between adjacent membranes and stimulates membrane hemifusion, leading to expansion of the autophagosomal membrane during autophagy. In addition to the protease activity, also catalyzes deconjugation of PE-conjugated forms of atg8 during macroautophagy since atg8 delipidation is required to release the protein from membranes, which facilitates multiple events during macroautophagy, and especially for efficient autophagosome biogenesis, the assembly of atg99-containing tubulovesicular clusters into phagophores/autophagosomes, and for the disassembly of PAS-associated ATG components. Atg8 delipidation by atg4 also recycles atg8-PE generated on inappropriate membranes to maintain a reservoir of unlipidated atg8 that is required for autophagosome formation at the PAS. The chain is Probable cysteine protease atg4 from Aspergillus oryzae (strain ATCC 42149 / RIB 40) (Yellow koji mold).